We begin with the raw amino-acid sequence, 308 residues long: MNNLEEFLDISEEVKEALHEKKAVVALESTIISHGMPYPENVESALNSEKNIRENNAVPATIAIIKGRIKVGLNKEELEYMGSNKNIAKSSRRDLPVMLALKKDGATTVTTTMIGASLAGIKVFATGGIGGVHRYAQETFDISADLQELSKTNVAVVCAGAKSILDIGLTIEYLETFGIPVLGYKTENFPAFYTRESGYKVDYKIDTTKDIANILDTKWKLGLNGGVLVCNPIPEEYEMDKDYINKIIDETVKEARDKNISGKDVTPYILAKLHSVTENKSLKANKELVYNNCRVAANIAYDYSNLSR.

Catalysis depends on glutamate 28, which acts as the Proton donor. Substrate contacts are provided by lysine 89 and valine 109. Aspartate 141 provides a ligand contact to Mn(2+). 143–145 serves as a coordination point for substrate; that stretch reads SAD. Residue lysine 162 is the Nucleophile of the active site.

This sequence belongs to the pseudouridine-5'-phosphate glycosidase family. Homotrimer. Mn(2+) is required as a cofactor.

The enzyme catalyses D-ribose 5-phosphate + uracil = psi-UMP + H2O. In terms of biological role, catalyzes the reversible cleavage of pseudouridine 5'-phosphate (PsiMP) to ribose 5-phosphate and uracil. Functions biologically in the cleavage direction, as part of a pseudouridine degradation pathway. This Brachyspira hyodysenteriae (strain ATCC 49526 / WA1) protein is Pseudouridine-5'-phosphate glycosidase.